We begin with the raw amino-acid sequence, 250 residues long: Putative (5-formylfuran-3-yl)methyl phosphate synthase (250 aa).

K29 functions as the Schiff-base intermediate with substrate in the catalytic mechanism. The Proton acceptor role is filled by K87.

The protein belongs to the MfnB family.

The catalysed reaction is 2 D-glyceraldehyde 3-phosphate = 4-(hydroxymethyl)-2-furancarboxaldehyde phosphate + phosphate + 2 H2O. Its function is as follows. Catalyzes the formation of 4-(hydroxymethyl)-2-furancarboxaldehyde phosphate (4-HFC-P) from two molecules of glyceraldehyde-3-P (GA-3-P). This chain is Putative (5-formylfuran-3-yl)methyl phosphate synthase, found in Streptomyces griseus subsp. griseus (strain JCM 4626 / CBS 651.72 / NBRC 13350 / KCC S-0626 / ISP 5235).